An 86-amino-acid polypeptide reads, in one-letter code: Small ribosomal subunit protein bS18 (86 aa).

The segment at 1–20 (MSREEGNNGRRPGGKMRRSR) is disordered.

This sequence belongs to the bacterial ribosomal protein bS18 family. As to quaternary structure, part of the 30S ribosomal subunit. Forms a tight heterodimer with protein bS6.

Its function is as follows. Binds as a heterodimer with protein bS6 to the central domain of the 16S rRNA, where it helps stabilize the platform of the 30S subunit. In Clostridium beijerinckii (strain ATCC 51743 / NCIMB 8052) (Clostridium acetobutylicum), this protein is Small ribosomal subunit protein bS18.